The chain runs to 366 residues: C-X-C chemokine receptor type 3 (366 aa).

Residues 1-55 are Extracellular-facing; it reads MVPEMSERQEFQASDFAYLLENSSYDYGENETYFCCTSPPCPQDFSLNFDRTFLP. An N-linked (GlcNAc...) asparagine glycan is attached at N22. Residues Y25 and Y27 each carry the sulfotyrosine modification. N30 is a glycosylation site (N-linked (GlcNAc...) asparagine). The helical transmembrane segment at 56–76 threads the bilayer; it reads VLYSLLFVLGLLGNGIVAVVL. Topologically, residues 77–88 are cytoplasmic; sequence LSQRAALSSTDT. A helical transmembrane segment spans residues 89–109; sequence FLLHLAVADALLVLTLPLWAV. Residues 110–124 lie on the Extracellular side of the membrane; that stretch reads DAAIQWVFGSGLCKV. C122 and C201 are joined by a disulfide. A helical transmembrane segment spans residues 125–145; sequence AGALFNINFYAGALLLACISF. Over 146 to 167 the chain is Cytoplasmic; sequence DRYLSIVHATQLYRRGPPTRVA. A helical membrane pass occupies residues 168–188; that stretch reads LTCVAVWGLCLLFALPDFIFL. At 189-221 the chain is on the extracellular side; it reads SSHHDNRLNATHCQYNFPQEGHTALRILQLVAG. Residue N197 is glycosylated (N-linked (GlcNAc...) asparagine). Residues 222–242 form a helical membrane-spanning segment; sequence FLLPLLVMAYCYARILAVLLV. Over 243–254 the chain is Cytoplasmic; sequence SRGQRRLRAMRL. Residues 255–275 traverse the membrane as a helical segment; it reads VVVVVVAFALCWTPYHLVVLV. At 276-299 the chain is on the extracellular side; that stretch reads DTLMDLGALARNCGRESSVDIAKS. A helical transmembrane segment spans residues 300–320; the sequence is VTSGMGYMHCCLNPLLYAFVG. The Cytoplasmic portion of the chain corresponds to 321–366; it reads VKFRERMWVLLVRLGCPDQRCHQRQPSASRRESSWSETTEASYSGL. The tract at residues 341 to 366 is disordered; that stretch reads CHQRQPSASRRESSWSETTEASYSGL. Low complexity predominate over residues 355 to 366; that stretch reads WSETTEASYSGL.

It belongs to the G-protein coupled receptor 1 family. Homomer. Forms heteromers with ACKR4. Interacts with PF4/CXCL4. Post-translationally, sulfation on Tyr-25 and Tyr-27 is essential for CXCL10 binding. N-glycosylated.

It is found in the cell membrane. Its function is as follows. Receptor for the C-X-C chemokine CXCL9, CXCL10 and CXCL11 and mediates the proliferation, survival and angiogenic activity of mesangial cells through a heterotrimeric G-protein signaling pathway. Probably promotes cell chemotaxis response. Binds to CCL21. Upon activation by PF4, induces activated T-lymphocytes migration mediated via downstream Ras/extracellular signal-regulated kinase (ERK) signaling. This chain is C-X-C chemokine receptor type 3 (CXCR3), found in Bos taurus (Bovine).